The sequence spans 315 residues: Tubulin beta-1 chain (315 aa).

GTP is bound by residues S6, G10, T11, G12, N72, and N94. The tract at residues 295-315 (DATADEEEYYEDEEEEEAQGM) is disordered. Residues 297–315 (TADEEEYYEDEEEEEAQGM) are compositionally biased toward acidic residues.

Belongs to the tubulin family. In terms of assembly, dimer of alpha and beta chains. A typical microtubule is a hollow water-filled tube with an outer diameter of 25 nm and an inner diameter of 15 nM. Alpha-beta heterodimers associate head-to-tail to form protofilaments running lengthwise along the microtubule wall with the beta-tubulin subunit facing the microtubule plus end conferring a structural polarity. Microtubules usually have 13 protofilaments but different protofilament numbers can be found in some organisms and specialized cells. The cofactor is Mg(2+).

It is found in the cytoplasm. It localises to the cytoskeleton. Tubulin is the major constituent of microtubules, a cylinder consisting of laterally associated linear protofilaments composed of alpha- and beta-tubulin heterodimers. Microtubules grow by the addition of GTP-tubulin dimers to the microtubule end, where a stabilizing cap forms. Below the cap, tubulin dimers are in GDP-bound state, owing to GTPase activity of alpha-tubulin. The chain is Tubulin beta-1 chain (TUBB1) from Daucus carota (Wild carrot).